A 177-amino-acid chain; its full sequence is Large ribosomal subunit protein uL6 (177 aa).

The interval 157–177 (YKGKGVRYAGEKVRRKEGKKK) is disordered.

This sequence belongs to the universal ribosomal protein uL6 family. As to quaternary structure, part of the 50S ribosomal subunit.

This protein binds to the 23S rRNA, and is important in its secondary structure. It is located near the subunit interface in the base of the L7/L12 stalk, and near the tRNA binding site of the peptidyltransferase center. The protein is Large ribosomal subunit protein uL6 of Caulobacter vibrioides (strain ATCC 19089 / CIP 103742 / CB 15) (Caulobacter crescentus).